The primary structure comprises 341 residues: KH domain-containing RNA-binding protein qki.S (341 aa).

One can recognise a KH domain in the interval 88-154; that stretch reads YVPVKEYPDF…WEHLNEDLHV (67 aa). The Nuclear localization signal signature appears at 324–330; it reads RVHPYQR.

Belongs to the quaking family. Homodimer; does not require RNA to homodimerize.

It is found in the nucleus. The protein localises to the cytoplasm. RNA reader protein, which recognizes and binds specific RNAs, thereby regulating RNA metabolic processes, such as pre-mRNA splicing, circular RNA (circRNA) formation, mRNA export, mRNA stability and/or translation. Involved in various cellular processes, such as mRNA storage into stress granules, apoptosis, interferon response, glial cell fate and development. Binds to the 5'-NACUAAY-N(1,20)-UAAY-3' RNA core sequence. Acts as a mRNA modification reader that specifically recognizes and binds mRNA transcripts modified by internal N(7)-methylguanine (m7G). Promotes the formation of circular RNAs (circRNAs): acts by binding to sites flanking circRNA-forming exons. CircRNAs are produced by back-splicing circularization of pre-mRNAs. Required to protect and promote stability of mRNAs which promotes oligodendrocyte differentiation. Acts as an important regulator of muscle development. Essential for notochord development. The polypeptide is KH domain-containing RNA-binding protein qki.S (Xenopus laevis (African clawed frog)).